Here is a 108-residue protein sequence, read N- to C-terminus: Heme-degrading monooxygenase HmoA (108 aa).

The region spanning 2 to 95 is the ABM domain; sequence FVQLRKMTVK…DYLISTEVSM (94 aa). Position 76 (His76) interacts with heme.

The protein belongs to the antibiotic biosynthesis monooxygenase family. Homodimer.

Its subcellular location is the cytoplasm. It carries out the reaction heme b + 3 reduced [NADPH--hemoprotein reductase] + 3 O2 = biliverdin IXalpha + CO + Fe(2+) + 3 oxidized [NADPH--hemoprotein reductase] + 3 H2O + H(+). Allows bacterial pathogens to use the host heme as an iron source. Catalyzes the oxidative degradation of the heme macrocyclic porphyrin ring in the presence of a suitable electron donor such as ascorbate or NADPH--cytochrome P450 reductase, with subsequent release of free iron. The chain is Heme-degrading monooxygenase HmoA (hmoA) from Bacillus subtilis (strain 168).